A 229-amino-acid polypeptide reads, in one-letter code: Wtf element wtf14 (229 aa).

Basic and acidic residues predominate over residues 1-26 (MENNHHLAKDSLDELNPKRGKGEHET). The segment at 1-27 (MENNHHLAKDSLDELNPKRGKGEHETQ) is disordered. Helical transmembrane passes span 71-91 (IPAVLLPVFVINIALFKYLVF), 100-120 (VLFGLGNGGINIFSMWLLLAT), 151-171 (LYAILKLTFVNAFAIPLLMFF), and 188-208 (VIGVMLNVAYFIIEIENPGLF).

The protein belongs to the WTF family.

The protein resides in the endoplasmic reticulum membrane. In terms of biological role, may act in meiotic drive. In Schizosaccharomyces kambucha (Fission yeast), this protein is Wtf element wtf14.